A 368-amino-acid chain; its full sequence is MDISFQIQDAVASVIRAPLASPFRIATGQHDELENVFLKLTTRDGVSGYGEAAVASHITGETVPGTLANLQNAAAALRGQTVDDAESACRQFAAAFAGNHAGLAALEMALLDLSSRVRGIPFYRLFAPVAALEPRLAFSTDITVVIGSLDEARATAREFASRGFKAFKIKIGRDEQLDLARVLAVHEIAPDSQIILDANMGFSAGSMLAFLDRLAAKGVRPVLLEQPVPKMDWDGLSEITAALTGSETLVCADESVGSLADARRAIDSNAVSAINVKFMKSGILEGAEIARLAASRGIRLMLGAMMESALAVTASAHFAAGLACFDYLDMDTTFFLKGELAHSPYLDEHGRFDLHDAGPGIGVEPRFS.

Substrate-binding positions include threonine 143 and 168–170 (KIK). Residues aspartate 197, glutamate 225, and aspartate 253 each contribute to the Mg(2+) site. Substrate contacts are provided by residues lysine 277 and 329-331 (DMD).

This sequence belongs to the mandelate racemase/muconate lactonizing enzyme family. Requires Mg(2+) as cofactor.

Its function is as follows. Catalyzes the epimerization of various hydrophobic dipeptides, such as L-Ala-L-Phe. Has epimerase activity with L-Ala-L-Thr, L-Ala-L-Met, L-Ala-L-Tyr, as well as L-Phe-L-Met, L-Phe-L-Ser and L-Phe-L-Thr (in vitro). In Citrifermentans bemidjiense (strain ATCC BAA-1014 / DSM 16622 / JCM 12645 / Bem) (Geobacter bemidjiensis), this protein is Hydrophobic dipeptide epimerase.